The sequence spans 473 residues: Cucurbitadienol 11-hydroxylase (473 aa).

The chain crosses the membrane as a helical span at residues 4–24 (VVLGLATLFVAYYIHWINKWR). Cysteine 422 contacts heme.

Belongs to the cytochrome P450 family. The cofactor is heme. As to expression, highly expressed in young fruits 15 days after anthesis (15-DAA). Also observed in roots.

It is found in the membrane. It catalyses the reaction cucurbitadienol + 2 reduced [NADPH--hemoprotein reductase] + 2 O2 = 11-oxocucurbitadienol + 2 oxidized [NADPH--hemoprotein reductase] + 3 H2O + 2 H(+). The catalysed reaction is cucurbitadienol + reduced [NADPH--hemoprotein reductase] + O2 = 11-hydroxycucurbitadienol + oxidized [NADPH--hemoprotein reductase] + H2O + H(+). The enzyme catalyses 11-hydroxycucurbitadienol + reduced [NADPH--hemoprotein reductase] + O2 = 11-oxocucurbitadienol + oxidized [NADPH--hemoprotein reductase] + 2 H2O + H(+). It carries out the reaction (24R)-24,25-dihydroxycucurbitadienol + reduced [NADPH--hemoprotein reductase] + O2 = mogrol + oxidized [NADPH--hemoprotein reductase] + H2O + H(+). Its pathway is secondary metabolite biosynthesis; terpenoid biosynthesis. Hydroxylase involved in the biosynthesis of cucurbitacin and mogroside tetracyclic triterpene natural products (e.g. siamenoside I and mogrosides IV, V and VI). Cucurbitacins have cytotoxic properties and exhibit deterrent taste as a defense barrier against herbivores. Mogrosides are nonsugar highly oxygenated compounds used as high-intensity zero-calorie sweeteners; they also possess pharmacological properties such as regulating immunity, lowering blood sugar and lipid levels, protecting the liver, and acting as antioxidants and antitumor agents. Catalyzes the oxidation of cucurbitadienol at the C-11 position to produce 11-oxocucurbitadienol, a possible biosynthetic intermediate from cucurbitadienol to mogrol. Also mediates the conversion of 24,25-dihydroxycucurbitadienol to mogrol. In Siraitia grosvenorii (Monk's fruit), this protein is Cucurbitadienol 11-hydroxylase.